Consider the following 128-residue polypeptide: Sirohydrochlorin cobaltochelatase (128 aa).

Histidine 9 functions as the Proton acceptor in the catalytic mechanism. A Co(2+)-binding site is contributed by histidine 9. Substrate-binding positions include lysine 43 and 68-73 (FATGTH). Histidine 73 is a binding site for Co(2+).

Belongs to the CbiX family. CbiXS subfamily. In terms of assembly, homotetramer; dimer of dimers.

The enzyme catalyses Co-sirohydrochlorin + 2 H(+) = sirohydrochlorin + Co(2+). The protein operates within cofactor biosynthesis; adenosylcobalamin biosynthesis; cob(II)yrinate a,c-diamide from sirohydrochlorin (anaerobic route): step 1/10. Functionally, catalyzes the insertion of Co(2+) into sirohydrochlorin as part of the anaerobic pathway to cobalamin biosynthesis. This Saccharolobus islandicus (strain Y.N.15.51 / Yellowstone #2) (Sulfolobus islandicus) protein is Sirohydrochlorin cobaltochelatase.